Consider the following 930-residue polypeptide: MTTGFLQKIFGSRNQRLVKQYQKTVATINALETQIEKLTDDQLRGKTGEFRQRIAAGESLDKLLPEAFAVCREASRRVLKMRHFDVQMIGGMVLHYGKIAEMRTGEGKTLVATLAAYLNALAGRGVHVVTVNDYLAQRDAEWMGRLYNFLGLSVGINLSGMEHDQKQAAYAADITYGTNNEFGFDYLRDNMVYETDARVQRPLNFAVVDEVDSILIDEARTPLIISGQAEDHTELYVRMNALPPLLERQIGEEKADGTGVEKPGDYTLDEKGRQVFLTESGHEKAERMLAEWGLIGDGESLYAPQNITLMHHVYAALRAHTLFHRDQHYVVQNGEVIIVDEFTGRLMPGRRWSDGLHQAVEAKEHVKIQSENQTLASITFQNYFRMYAKLSGMTGTADTEAYEFNEIYGLETVVIPTNRPPKRIDKQDQIYKTAKERYDAVIRDIRECYERGQPVLVGTTSIENSELLSHLLKQAGLPHEVLNAKQHAREAAIVAEAGRPKRVTIATNMAGRGTDIVLGGNVEKQAAFIEADEAIPADEKARRIQQLHDEWETLHEQVKTAGGLHIIGTERHESRRIDNQLRGRAGRQGDPGSSRFYLSLEDPLLRIFAGDRVRAIMDRLKMPEGEAIEAGIVTRSIESAQRKVEARNFDIRKQLLEYDDVSNDQRKVIYQQRNELLEAHDIAETIGAMRHGVISEVVRQFVPAGSIEEQWDLPELEETLRNDWQLDLAIQEMVNESSSINADEILDAVTTAADEHYEAKVALVGRESFSAFERSIMLQTLDRLWREHLAALDHLRQGIHLRGYAQKNPKQEYKREAFELFAAMLDAVKQEVTRIVMNVQIQSPEQLEEAAEQIEEQGGQLGNVEFQHADFAAAAAASAGGAVVADATAEMVGHAMSHSGPAGEVPRVGRNDPCPCGSGKKYKHCHGKLS.

Residues Gln87, 105–109 (GEGKT), and Asp515 each bind ATP. Zn(2+) is bound by residues Cys914, Cys916, Cys925, and His926.

The protein belongs to the SecA family. In terms of assembly, monomer and homodimer. Part of the essential Sec protein translocation apparatus which comprises SecA, SecYEG and auxiliary proteins SecDF-YajC and YidC. It depends on Zn(2+) as a cofactor.

The protein resides in the cell inner membrane. The protein localises to the cytoplasm. It catalyses the reaction ATP + H2O + cellular proteinSide 1 = ADP + phosphate + cellular proteinSide 2.. In terms of biological role, part of the Sec protein translocase complex. Interacts with the SecYEG preprotein conducting channel. Has a central role in coupling the hydrolysis of ATP to the transfer of proteins into and across the cell membrane, serving both as a receptor for the preprotein-SecB complex and as an ATP-driven molecular motor driving the stepwise translocation of polypeptide chains across the membrane. The protein is Protein translocase subunit SecA of Burkholderia thailandensis (strain ATCC 700388 / DSM 13276 / CCUG 48851 / CIP 106301 / E264).